The sequence spans 96 residues: Co-chaperonin GroES (96 aa).

The protein belongs to the GroES chaperonin family. As to quaternary structure, heptamer of 7 subunits arranged in a ring. Interacts with the chaperonin GroEL.

It localises to the cytoplasm. Together with the chaperonin GroEL, plays an essential role in assisting protein folding. The GroEL-GroES system forms a nano-cage that allows encapsulation of the non-native substrate proteins and provides a physical environment optimized to promote and accelerate protein folding. GroES binds to the apical surface of the GroEL ring, thereby capping the opening of the GroEL channel. In Buchnera aphidicola subsp. Schizaphis graminum (strain Sg), this protein is Co-chaperonin GroES.